The chain runs to 652 residues: DNA mismatch repair protein MutL (652 aa).

It belongs to the DNA mismatch repair MutL/HexB family.

Functionally, this protein is involved in the repair of mismatches in DNA. It is required for dam-dependent methyl-directed DNA mismatch repair. May act as a 'molecular matchmaker', a protein that promotes the formation of a stable complex between two or more DNA-binding proteins in an ATP-dependent manner without itself being part of a final effector complex. This is DNA mismatch repair protein MutL from Aliivibrio salmonicida (strain LFI1238) (Vibrio salmonicida (strain LFI1238)).